A 423-amino-acid polypeptide reads, in one-letter code: MGNRHGIMRPRRLASGRSAAEEEEDGEGEPGSYEAACSADPELGTFDTALRRRASRAITAVASGVEVRSLSLGSLREVTGCLLDMNQEVVRVVLDCKRDVWRSPDLFDLVEDYFEGSLHTLDFLAALDKSLHRARDSQLVLHLALQRHHHEPPAAASASELYASTLGELRQFKAAGEPFTDEFFAAFQTVYRQQMSMVGKLRRRKRRLDRRLRSVRVWRRVSGIVFLTSFAALLVCSVVAAAIAAPPVAAALAAAASMPVGSAGKWMDSLLKKYQDALHGHKEVVSAMQVGTFIAIKDLDSIRVLVEHLEVQISSMADSVEFAERDEEAVRFGIDEVKKKLELFMKSVDDLGEQADRNNMRMCHILPEYVFFINLANGNGMSESLFEMMNAFHDICRKDIKFKTSHYYLNFLSSSYQVYIAVA.

Basic residues predominate over residues 1–14; sequence MGNRHGIMRPRRLA. The tract at residues 1–37 is disordered; it reads MGNRHGIMRPRRLASGRSAAEEEEDGEGEPGSYEAAC. Transmembrane regions (helical) follow at residues 224 to 244 and 247 to 267; these read IVFL…AAIA and PVAA…GKWM.

It belongs to the UPF0496 family.

It localises to the membrane. The chain is Putative UPF0496 protein 5 from Oryza sativa subsp. japonica (Rice).